A 306-amino-acid chain; its full sequence is Solute carrier family 25 member 48 (306 aa).

Solcar repeat units follow at residues 3–86, 101–200, and 209–296; these read SFQL…TQRF, RSLS…LSEW, and PSPY…SLKA. The next 6 membrane-spanning stretches (helical) occupy residues 9 to 29, 61 to 81, 107 to 127, 184 to 204, 212 to 232, and 272 to 290; these read FVAG…LDTV, GMSF…GVFS, LLAS…VELI, IPGY…ITPE, YAAW…ATPM, and ITVN…FLGY.

This sequence belongs to the mitochondrial carrier (TC 2.A.29) family.

It localises to the mitochondrion inner membrane. The chain is Solute carrier family 25 member 48 (Slc25a48) from Mus musculus (Mouse).